An 840-amino-acid chain; its full sequence is Phosphatidylglycerol lysyltransferase (840 aa).

Over 1–8 (MTEELKNR) the chain is Cytoplasmic. The chain crosses the membrane as a helical span at residues 9–29 (LLSILKFVFAAVLFIAVVATL). Residues 30–52 (YHELAHINFKQTLEAFSKINRWY) are Extracellular-facing. Residues 53 to 73 (LVGLFICGGSAMILLSLYDLI) form a helical membrane-spanning segment. The Cytoplasmic segment spans residues 74-89 (LVKGLKLDIPLIRVFK). Residues 90–110 (ISYIINALNAIVGFGGFIGAG) form a helical membrane-spanning segment. The Extracellular portion of the chain corresponds to 111–129 (FRAFIYKNYTTDRKKLVHA). A helical transmembrane segment spans residues 130–150 (ISIILISMLMGLSLLSILVVL). At 151–167 (HIFDASHIINKVSWVRW) the chain is on the cytoplasmic side. The helical transmembrane segment at 168 to 188 (ILYVVALFLPLFIAYTMINPI) threads the bilayer. Residues 189 to 193 (DRNNK) are Extracellular-facing. The chain crosses the membrane as a helical span at residues 194 to 216 (YLGVYCTLVSSFEWLAAATVLYL). Residues 217–229 (STVIVDINIAFTT) lie on the Cytoplasmic side of the membrane. A helical transmembrane segment spans residues 230-250 (VIGIFIIAALSGLVSFIPGGF). Topologically, residues 251 to 271 (GAFDLVVLLGLKSLGVPEEKV) are extracellular. Residues 272–292 (LLALLLYRFAYYFVPVIIALI) traverse the membrane as a helical segment. Topologically, residues 293 to 335 (LSTFEFGSSARKYFEESKYFVPARDVTSFLFSYQKDIIAKIPS) are cytoplasmic. A helical membrane pass occupies residues 336–356 (FALATLVLITSFVFFINNITI). The Extracellular segment spans residues 357–366 (VYDGLYDDHH). The helical transmembrane segment at 367 to 387 (FAYYIMLSVHTSACLLLLINV) threads the bilayer. Residues 388 to 394 (RGVFKQS) are Cytoplasmic-facing. A run of 2 helical transmembrane segments spans residues 395 to 415 (RRAI…TIYT) and 416 to 436 (YASL…ILAY). Residues 437-450 (RRSKVMKRPFRLKR) lie on the Cytoplasmic side of the membrane. The helical transmembrane segment at 451-471 (LIFTIILSMLVLYVNHFIISE) threads the bilayer. Residues 472–490 (TLYALDIYHIEMDTSLLKY) are Extracellular-facing. A helical transmembrane segment spans residues 491-511 (YFWLTILVVVILVGIVAWLLG). The Cytoplasmic portion of the chain corresponds to 512 to 840 (SRYTRPHQLE…LKVMRVIRHK (329 aa)).

It belongs to the LPG synthase family.

It localises to the cell membrane. The catalysed reaction is L-lysyl-tRNA(Lys) + a 1,2-diacyl-sn-glycero-3-phospho-(1'-sn-glycerol) = a 1,2-diacyl-sn-glycero-3-phospho-1'-(3'-O-L-lysyl)-sn-glycerol + tRNA(Lys). In terms of biological role, catalyzes the transfer of a lysyl group from L-lysyl-tRNA(Lys) to membrane-bound phosphatidylglycerol (PG), which produces lysylphosphatidylglycerol (LPG), a major component of the bacterial membrane with a positive net charge. LPG synthesis contributes to bacterial virulence as it is involved in the resistance mechanism against cationic antimicrobial peptides (CAMP) produces by the host's immune system (defensins, cathelicidins) and by the competing microorganisms (bacteriocins). In fact, the modification of anionic phosphatidylglycerol with positively charged L-lysine results in repulsion of the peptides. The polypeptide is Phosphatidylglycerol lysyltransferase (mprF) (Staphylococcus haemolyticus (strain JCSC1435)).